The primary structure comprises 205 residues: LexA repressor (205 aa).

The H-T-H motif DNA-binding region spans 29–49 (IRDICKATGLRSSSTVYNYLN). Residues S128 and K165 each act as for autocatalytic cleavage activity in the active site.

This sequence belongs to the peptidase S24 family. As to quaternary structure, homodimer.

The catalysed reaction is Hydrolysis of Ala-|-Gly bond in repressor LexA.. Its function is as follows. Represses a number of genes involved in the response to DNA damage (SOS response), including recA and lexA. In the presence of single-stranded DNA, RecA interacts with LexA causing an autocatalytic cleavage which disrupts the DNA-binding part of LexA, leading to derepression of the SOS regulon and eventually DNA repair. The protein is LexA repressor of Moorella thermoacetica (strain ATCC 39073 / JCM 9320).